The following is a 413-amino-acid chain: Glutamyl-tRNA reductase (413 aa).

Substrate contacts are provided by residues 57 to 60 (TCNR), serine 113, 118 to 120 (DFE), and glutamine 124. Cysteine 58 serves as the catalytic Nucleophile. 193-198 (GTGKIG) serves as a coordination point for NADP(+).

Belongs to the glutamyl-tRNA reductase family. As to quaternary structure, homodimer.

The catalysed reaction is (S)-4-amino-5-oxopentanoate + tRNA(Glu) + NADP(+) = L-glutamyl-tRNA(Glu) + NADPH + H(+). It functions in the pathway porphyrin-containing compound metabolism; protoporphyrin-IX biosynthesis; 5-aminolevulinate from L-glutamyl-tRNA(Glu): step 1/2. Catalyzes the NADPH-dependent reduction of glutamyl-tRNA(Glu) to glutamate 1-semialdehyde (GSA). The chain is Glutamyl-tRNA reductase from Flavobacterium psychrophilum (strain ATCC 49511 / DSM 21280 / CIP 103535 / JIP02/86).